Reading from the N-terminus, the 277-residue chain is S-formylglutathione hydrolase FrmB (277 aa).

Catalysis depends on charge relay system residues serine 145, aspartate 221, and histidine 254.

This sequence belongs to the esterase D family.

The enzyme catalyses S-formylglutathione + H2O = formate + glutathione + H(+). Its function is as follows. Serine hydrolase involved in the detoxification of formaldehyde. Hydrolyzes S-formylglutathione to glutathione and formate. The polypeptide is S-formylglutathione hydrolase FrmB (frmB) (Escherichia coli (strain SMS-3-5 / SECEC)).